The sequence spans 288 residues: ATP synthase subunit a (288 aa).

6 consecutive transmembrane segments (helical) span residues 47–67, 104–124, 157–177, 199–219, 237–257, and 258–278; these read LDSM…FWMV, LIAP…LMDL, DPNI…FYSI, PIVQ…TLIA, LIFI…SVPW, and AIFH…LTIV.

It belongs to the ATPase A chain family. As to quaternary structure, F-type ATPases have 2 components, CF(1) - the catalytic core - and CF(0) - the membrane proton channel. CF(1) has five subunits: alpha(3), beta(3), gamma(1), delta(1), epsilon(1). CF(0) has three main subunits: a(1), b(2) and c(9-12). The alpha and beta chains form an alternating ring which encloses part of the gamma chain. CF(1) is attached to CF(0) by a central stalk formed by the gamma and epsilon chains, while a peripheral stalk is formed by the delta and b chains.

The protein resides in the cell inner membrane. In terms of biological role, key component of the proton channel; it plays a direct role in the translocation of protons across the membrane. The chain is ATP synthase subunit a from Psychrobacter cryohalolentis (strain ATCC BAA-1226 / DSM 17306 / VKM B-2378 / K5).